A 489-amino-acid polypeptide reads, in one-letter code: Diacylglycerol O-acyltransferase 1 (489 aa).

Residues 1–54 are disordered; it reads MGDRGGAGGSRRRRTGSRPSIQGGSGPAAAEEEVRDVGAGGDAPVRDTDKDGDV. Over 1–80 the chain is Cytoplasmic; the sequence is MGDRGGAGGS…SLFSSDSGFS (80 aa). The tract at residues 1–88 is involved in homomerization; it reads MGDRGGAGGS…FSNYRGILNW (88 aa). Ser20 carries the phosphoserine modification. A compositionally biased stretch (basic and acidic residues) spans 44 to 53; the sequence is PVRDTDKDGD. The helical transmembrane segment at 81–115 threads the bilayer; that stretch reads NYRGILNWCVVMLILSNARLFLENLIKYGILVDPI. Residues 116–127 lie on the Lumenal side of the membrane; it reads QVVSLFLKDPYS. An extracellular loop 1 (EL1) region spans residues 116-127; the sequence is QVVSLFLKDPYS. Residues 128–153 form a helical membrane-spanning segment; it reads WPALCLVIVANIFAVAAFQVEKRLAV. The interval 128 to 489 is MBOAT fold; that stretch reads WPALCLVIVA…LNREAPAAGT (362 aa). At 154 to 158 the chain is on the cytoplasmic side; that stretch reads GALTE. Residues 159–181 form a helical membrane-spanning segment; that stretch reads QAGLLLHGVNLATILCFPAAVAF. The Lumenal portion of the chain corresponds to 182–188; the sequence is LLESITP. A helical transmembrane segment spans residues 189–220; the sequence is VGSVLALMVYTILFLKLFSYRDVNLWCRERRA. Residues 221-274 lie on the Cytoplasmic side of the membrane; that stretch reads GAKAKAALAGKKANGGAAQRTVSYPDNLTYRDLYYFLFAPTLCYELNFPRSPRI. The tract at residues 225–277 is intracellular loop 1 (IL1); sequence KAALAGKKANGGAAQRTVSYPDNLTYRDLYYFLFAPTLCYELNFPRSPRIRKR. Residues 275–309 form a helical membrane-spanning segment; the sequence is RKRFLLRRLLEMLFLTQLQVGLIQQWMVPAIQNSM. Residues 310–316 are Lumenal-facing; that stretch reads KPFKDMD. The helical transmembrane segment at 317–354 threads the bilayer; it reads YSRIVERLLKLAVPNHLIWLIFFYWLFHSCLNAVAELM. Over 355 to 400 the chain is Cytoplasmic; that stretch reads QFGDREFYRDWWNSESITYFWQNWNIPVHKWCIRHFYKPMLRRGSS. The segment at 355–400 is intracellular loop 2 (IL2); that stretch reads QFGDREFYRDWWNSESITYFWQNWNIPVHKWCIRHFYKPMLRRGSS. Positions 361 to 367 match the FYXDWWN motif motif; it reads FYRDWWN. An acyl-CoA is bound by residues 375–383, Tyr391, and Arg405; that span reads WQNWNIPVH. The interval 381 to 395 is amphipathic helix (AH); the sequence is PVHKWCIRHFYKPML. Residues 401 to 421 traverse the membrane as a helical segment; it reads KWAARTAVFLASAFFHEYLVS. The active site involves His416. Topologically, residues 422-429 are lumenal; that stretch reads IPLRMFRL. The helical transmembrane segment at 430-448 threads the bilayer; that stretch reads WAFTGMMAQIPLAWIVGRF. Topologically, residues 449–450 are cytoplasmic; it reads FR. A helical transmembrane segment spans residues 451-482; it reads GNYGNAAVWLSLIIGQPVAVLMYVHDYYVLNR. Tyr478 is a binding site for an acyl-CoA. Residues 483 to 489 are Lumenal-facing; that stretch reads EAPAAGT.

Belongs to the membrane-bound acyltransferase family. Sterol o-acyltransferase subfamily. Homodimer or homotetramer; both forms have similar enzymatic activities.

The protein resides in the endoplasmic reticulum membrane. The enzyme catalyses an acyl-CoA + a 1,2-diacyl-sn-glycerol = a triacyl-sn-glycerol + CoA. It catalyses the reaction all-trans-retinol + an acyl-CoA = an all-trans-retinyl ester + CoA. It carries out the reaction 2-(9Z-octadecenoyl)-glycerol + (9Z)-octadecenoyl-CoA = 1,2-di-(9Z-octadecenoyl)-sn-glycerol + CoA. The catalysed reaction is 1,2-di-(9Z-octadecenoyl)-sn-glycerol + (9Z)-octadecenoyl-CoA = 1,2,3-tri-(9Z-octadecenoyl)-glycerol + CoA. The enzyme catalyses all-trans-retinol + hexadecanoyl-CoA = all-trans-retinyl hexadecanoate + CoA. It catalyses the reaction 1-O-(9Z-octadecenyl)-glycerol + (9Z)-octadecenoyl-CoA = 1-O-(9Z-octadecyl)-3-(9Z-octadecenoyl)-glycerol + CoA. It carries out the reaction 1-O-(9Z-octadecyl)-3-(9Z-octadecenoyl)-glycerol + (9Z)-octadecenoyl-CoA = 1-O-(9Z-octadecenyl)-2,3-di-(9Z-octadecenoyl)glycerol + CoA. The catalysed reaction is 1-(9Z-octadecenoyl)-glycerol + (9Z)-octadecenoyl-CoA = 1,2-di-(9Z-octadecenoyl)-glycerol + CoA. The enzyme catalyses 1,2-di-(9Z-octadecenoyl)-glycerol + (9Z)-octadecenoate + H(+) = 1,2,3-tri-(9Z-octadecenoyl)-glycerol + H2O. It catalyses the reaction 1-octadecanoyl-2-(5Z,8Z,11Z,14Z-eicosatetraenoyl)-sn-glycerol + (9Z)-octadecenoyl-CoA = 1-octadecanoyl-2-(5Z,8Z,11Z,14Z)-eicosatetraenoyl-3-(9Z)-octadecenoyl-sn-glycerol + CoA. It carries out the reaction hexadecane-1,2-diol + 2 hexadecanoyl-CoA = 1,2-O,O-dihexadecanoyl-1,2-hexadecanediol + 2 CoA. The catalysed reaction is hexadecane-1,2-diol + hexadecanoyl-CoA = 2-hydroxyhexadecyl hexadecanoate + CoA. The enzyme catalyses 2-(9Z-octadecenoyl)-glycerol + hexadecanoyl-CoA = 1-hexadecanoyl-2-(9Z-octadecenoyl)-sn-glycerol + CoA. It catalyses the reaction 1,2-di-(9Z-octadecenoyl)-sn-glycerol + hexadecanoyl-CoA = 1,2-di-(9Z)-octadecenoyl-3-hexadecanoyl-sn-glycerol + CoA. It carries out the reaction hexadecan-1-ol + hexadecanoyl-CoA = hexadecanyl hexadecanoate + CoA. The catalysed reaction is 13-cis-retinol + hexadecanoyl-CoA = 13-cis-retinyl hexadecanoate + CoA. The enzyme catalyses 1,3-di-(9Z-octadecenoyl)-glycerol + (9Z)-octadecenoyl-CoA = 1,2,3-tri-(9Z-octadecenoyl)-glycerol + CoA. It catalyses the reaction 2,3-di-(9Z)-octadecenoyl-sn-glycerol + (9Z)-octadecenoyl-CoA = 1,2,3-tri-(9Z-octadecenoyl)-glycerol + CoA. Its pathway is lipid metabolism; glycerolipid metabolism. Catalyzes the terminal and only committed step in triacylglycerol synthesis by using diacylglycerol and fatty acyl CoA as substrates. Highly expressed in epithelial cells of the small intestine and its activity is essential for the absorption of dietary fats. In liver, plays a role in esterifying exogenous fatty acids to glycerol, and is required to synthesize fat for storage. Also present in female mammary glands, where it produces fat in the milk. May be involved in VLDL (very low density lipoprotein) assembly. In contrast to DGAT2 it is not essential for survival. Functions as the major acyl-CoA retinol acyltransferase (ARAT) in the skin, where it acts to maintain retinoid homeostasis and prevent retinoid toxicity leading to skin and hair disorders. Exhibits additional acyltransferase activities, includin acyl CoA:monoacylglycerol acyltransferase (MGAT), wax monoester and wax diester synthases. Also able to use 1-monoalkylglycerol (1-MAkG) as an acyl acceptor for the synthesis of monoalkyl-monoacylglycerol (MAMAG). The protein is Diacylglycerol O-acyltransferase 1 (DGAT1) of Bos taurus (Bovine).